The primary structure comprises 258 residues: Cell division protein FtsQ (258 aa).

The Cytoplasmic portion of the chain corresponds to 1 to 29 (MAKNAPAPRGARRKPVKKVGVPLRERVAT). A helical membrane pass occupies residues 30–50 (AVPWMLVGSVAMVSLLAVIYL). The Periplasmic portion of the chain corresponds to 51-258 (PAALDGYPIR…MAVTWREQQS (208 aa)). In terms of domain architecture, POTRA spans 57-127 (YPIRKVGVDG…DTVVLTVEER (71 aa)).

It belongs to the FtsQ/DivIB family. FtsQ subfamily. In terms of assembly, part of a complex composed of FtsB, FtsL and FtsQ.

Its subcellular location is the cell inner membrane. Essential cell division protein. May link together the upstream cell division proteins, which are predominantly cytoplasmic, with the downstream cell division proteins, which are predominantly periplasmic. May control correct divisome assembly. The protein is Cell division protein FtsQ of Alcanivorax borkumensis (strain ATCC 700651 / DSM 11573 / NCIMB 13689 / SK2).